The chain runs to 1289 residues: SH3 domain and tetratricopeptide repeat-containing protein 2 (1289 aa).

SH3 domains are found at residues 176-239 and 267-330; these read EGHF…PLPV and IGRG…LDSC. A disordered region spans residues 393 to 442; it reads SQPEGFREARSGGTWMERQTIGSRRSSGSGDSSPEEDELISASSDSYHLP. Positions 414 to 424 are enriched in low complexity; that stretch reads GSRRSSGSGDS. TPR repeat units follow at residues 529–562, 758–791, 837–870, 1002–1038, 1085–1119, 1120–1153, 1167–1200, and 1211–1245; these read ARLCFLLGRLSIRKTKLSQARVYFEEAIRVLDGA, RTLCLILSKMYLQHQSPDGSVHYLSQAHVLGKLL, GVVHNLLGLAFEDEGRTSRAAKSYLRALIRAREM, GQLLESLGQLYRNLNTSRSLRRSLACIKESLRIFVDL, LKLYEEAGDVFFNGTRHRHRAVEYYRAGAVPLARR, MKALRTELRIFNKLTELQISLEGYEKALEFATLA, LVAFHRLATVYFSLNMYEMAEDCYLKTLSLCPPW, and AKVYCRLGRLTFYQLKDAHDATEYFLLALAAAVLM.

This Mus musculus (Mouse) protein is SH3 domain and tetratricopeptide repeat-containing protein 2 (Sh3tc2).